The following is a 276-amino-acid chain: Monoglyceride lipase homolog (276 aa).

It belongs to the orthopoxvirus OPG043 family.

The sequence is that of Monoglyceride lipase homolog (OPG043) from Cynomys gunnisoni (Gunnison's prairie dog).